Here is a 333-residue protein sequence, read N- to C-terminus: Acetyl-coenzyme A carboxylase carboxyl transferase subunit alpha (333 aa).

The 261-residue stretch at 48–308 (LLEQKVDALR…KEMLVEELRD (261 aa)) folds into the CoA carboxyltransferase C-terminal domain.

The protein belongs to the AccA family. As to quaternary structure, acetyl-CoA carboxylase is a heterohexamer composed of biotin carboxyl carrier protein (AccB), biotin carboxylase (AccC) and two subunits each of ACCase subunit alpha (AccA) and ACCase subunit beta (AccD).

The protein resides in the cytoplasm. The enzyme catalyses N(6)-carboxybiotinyl-L-lysyl-[protein] + acetyl-CoA = N(6)-biotinyl-L-lysyl-[protein] + malonyl-CoA. The protein operates within lipid metabolism; malonyl-CoA biosynthesis; malonyl-CoA from acetyl-CoA: step 1/1. Functionally, component of the acetyl coenzyme A carboxylase (ACC) complex. First, biotin carboxylase catalyzes the carboxylation of biotin on its carrier protein (BCCP) and then the CO(2) group is transferred by the carboxyltransferase to acetyl-CoA to form malonyl-CoA. This is Acetyl-coenzyme A carboxylase carboxyl transferase subunit alpha from Chlorobium limicola (strain DSM 245 / NBRC 103803 / 6330).